Reading from the N-terminus, the 187-residue chain is Rusticyanin (187 aa).

An N-terminal signal peptide occupies residues 1 to 32 (MYTQNTMKKNWYVTVGAAAALAATVGMGTAMA). Residues 85 to 187 (SFEVHDKKNP…TGMFGKIIVK (103 aa)) form the Plastocyanin-like domain. Positions 117, 170, 175, and 180 each coordinate Cu cation.

Monomer. Cu cation serves as cofactor.

Its subcellular location is the periplasm. In terms of biological role, electron carrier from cytochrome c552 to the A-type oxidase. In Acidithiobacillus ferridurans, this protein is Rusticyanin (rus).